Consider the following 316-residue polypeptide: Ferrochelatase (316 aa).

Histidine 190 and glutamate 271 together coordinate Fe cation.

Belongs to the ferrochelatase family.

Its subcellular location is the cytoplasm. The enzyme catalyses heme b + 2 H(+) = protoporphyrin IX + Fe(2+). It functions in the pathway porphyrin-containing compound metabolism; protoheme biosynthesis; protoheme from protoporphyrin-IX: step 1/1. Functionally, catalyzes the ferrous insertion into protoporphyrin IX. The polypeptide is Ferrochelatase (Sulfurimonas denitrificans (strain ATCC 33889 / DSM 1251) (Thiomicrospira denitrificans (strain ATCC 33889 / DSM 1251))).